The following is a 55-amino-acid chain: Large ribosomal subunit protein bL33 (55 aa).

Belongs to the bacterial ribosomal protein bL33 family.

In Azorhizobium caulinodans (strain ATCC 43989 / DSM 5975 / JCM 20966 / LMG 6465 / NBRC 14845 / NCIMB 13405 / ORS 571), this protein is Large ribosomal subunit protein bL33.